The sequence spans 487 residues: Adenosylhomocysteinase (487 aa).

Positions 76, 151, and 212 each coordinate substrate. 213–215 (TTT) lines the NAD(+) pocket. 2 residues coordinate substrate: K242 and D246. NAD(+) is bound by residues N247, 276–281 (GYGDVG), E299, N334, 355–357 (IGH), and N403.

The protein belongs to the adenosylhomocysteinase family. NAD(+) serves as cofactor.

Its subcellular location is the cytoplasm. It carries out the reaction S-adenosyl-L-homocysteine + H2O = L-homocysteine + adenosine. It functions in the pathway amino-acid biosynthesis; L-homocysteine biosynthesis; L-homocysteine from S-adenosyl-L-homocysteine: step 1/1. Functionally, may play a key role in the regulation of the intracellular concentration of adenosylhomocysteine. The chain is Adenosylhomocysteinase from Bacteroides fragilis (strain YCH46).